Consider the following 144-residue polypeptide: Deoxyuridine 5'-triphosphate nucleotidohydrolase (144 aa).

Substrate contacts are provided by residues 63–65 (RSG), N76, and 80–82 (TID).

It belongs to the dUTPase family. The cofactor is Mg(2+).

It carries out the reaction dUTP + H2O = dUMP + diphosphate + H(+). It functions in the pathway pyrimidine metabolism; dUMP biosynthesis; dUMP from dCTP (dUTP route): step 2/2. In terms of biological role, this enzyme is involved in nucleotide metabolism: it produces dUMP, the immediate precursor of thymidine nucleotides and it decreases the intracellular concentration of dUTP so that uracil cannot be incorporated into DNA. This is Deoxyuridine 5'-triphosphate nucleotidohydrolase from Phocaeicola vulgatus (strain ATCC 8482 / DSM 1447 / JCM 5826 / CCUG 4940 / NBRC 14291 / NCTC 11154) (Bacteroides vulgatus).